The primary structure comprises 105 residues: Large ribosomal subunit protein uL24 (105 aa).

Belongs to the universal ribosomal protein uL24 family. As to quaternary structure, part of the 50S ribosomal subunit.

In terms of biological role, one of two assembly initiator proteins, it binds directly to the 5'-end of the 23S rRNA, where it nucleates assembly of the 50S subunit. Functionally, one of the proteins that surrounds the polypeptide exit tunnel on the outside of the subunit. The sequence is that of Large ribosomal subunit protein uL24 from Acinetobacter baumannii (strain AB307-0294).